Consider the following 279-residue polypeptide: Oxygen-dependent coproporphyrinogen-III oxidase (279 aa).

Serine 102 is a binding site for substrate. Positions 106 and 116 each coordinate a divalent metal cation. Histidine 116 acts as the Proton donor in catalysis. Position 118–120 (118–120) interacts with substrate; sequence NTR. A divalent metal cation is bound by residues histidine 149 and histidine 179. Residues 244–279 are important for dimerization; it reads YVEFNLLYDRGTKFGLMTDGNVEAILMSLPPEVKFN.

Belongs to the aerobic coproporphyrinogen-III oxidase family. Homodimer. A divalent metal cation serves as cofactor.

Its subcellular location is the cytoplasm. It catalyses the reaction coproporphyrinogen III + O2 + 2 H(+) = protoporphyrinogen IX + 2 CO2 + 2 H2O. It functions in the pathway porphyrin-containing compound metabolism; protoporphyrin-IX biosynthesis; protoporphyrinogen-IX from coproporphyrinogen-III (O2 route): step 1/1. Functionally, involved in the heme biosynthesis. Catalyzes the aerobic oxidative decarboxylation of propionate groups of rings A and B of coproporphyrinogen-III to yield the vinyl groups in protoporphyrinogen-IX. This Rickettsia rickettsii (strain Iowa) protein is Oxygen-dependent coproporphyrinogen-III oxidase.